A 495-amino-acid chain; its full sequence is Adenosylhomocysteinase (495 aa).

Residues threonine 71, aspartate 156, and glutamate 218 each coordinate substrate. NAD(+) is bound at residue 219 to 221 (TTT). Substrate is bound by residues lysine 248 and aspartate 252. Residues asparagine 253, 282–287 (GYGDVG), glutamate 305, asparagine 340, 361–363 (IGH), and asparagine 409 each bind NAD(+).

It belongs to the adenosylhomocysteinase family. NAD(+) is required as a cofactor.

It localises to the cytoplasm. The enzyme catalyses S-adenosyl-L-homocysteine + H2O = L-homocysteine + adenosine. The protein operates within amino-acid biosynthesis; L-homocysteine biosynthesis; L-homocysteine from S-adenosyl-L-homocysteine: step 1/1. Its function is as follows. May play a key role in the regulation of the intracellular concentration of adenosylhomocysteine. In Mycobacterium bovis (strain ATCC BAA-935 / AF2122/97), this protein is Adenosylhomocysteinase.